A 237-amino-acid polypeptide reads, in one-letter code: Ribonuclease PH (237 aa).

Phosphate-binding positions include R86 and G124–R126.

The protein belongs to the RNase PH family. Homohexameric ring arranged as a trimer of dimers.

It catalyses the reaction tRNA(n+1) + phosphate = tRNA(n) + a ribonucleoside 5'-diphosphate. Phosphorolytic 3'-5' exoribonuclease that plays an important role in tRNA 3'-end maturation. Removes nucleotide residues following the 3'-CCA terminus of tRNAs; can also add nucleotides to the ends of RNA molecules by using nucleoside diphosphates as substrates, but this may not be physiologically important. Probably plays a role in initiation of 16S rRNA degradation (leading to ribosome degradation) during starvation. This is Ribonuclease PH from Rhodopseudomonas palustris (strain ATCC BAA-98 / CGA009).